The sequence spans 724 residues: Methionine--tRNA ligase (724 aa).

A 'HIGH' region motif is present at residues 11-21 (PYANGPIHAGH). Positions 143, 146, 156, and 159 each coordinate Zn(2+). The short motif at 344 to 348 (KFSTS) is the 'KMSKS' region element. Thr347 provides a ligand contact to ATP. The region spanning 624–724 (EFSKIDLRIG…KEVKLGAKVR (101 aa)) is the tRNA-binding domain.

Belongs to the class-I aminoacyl-tRNA synthetase family. MetG type 1 subfamily. As to quaternary structure, homodimer. Requires Zn(2+) as cofactor.

The protein resides in the cytoplasm. It carries out the reaction tRNA(Met) + L-methionine + ATP = L-methionyl-tRNA(Met) + AMP + diphosphate. Functionally, is required not only for elongation of protein synthesis but also for the initiation of all mRNA translation through initiator tRNA(fMet) aminoacylation. This chain is Methionine--tRNA ligase, found in Pyrococcus furiosus (strain ATCC 43587 / DSM 3638 / JCM 8422 / Vc1).